The following is a 530-amino-acid chain: ATP-dependent 6-phosphofructokinase 4, chloroplastic (530 aa).

Residues 1 to 54 (MEASISFLGSTKPNISLFNPSSNVLPRRDFPLPALKLKKVSVLPRILHQKRLIR) constitute a chloroplast transit peptide. S121 carries the phosphoserine modification. ATP is bound by residues G152, 215-216 (RG), and 240-243 (GGGT). Substrate-binding positions include 269–271 (TID), 314–316 (MGR), E370, and 427–430 (YMIR). Catalysis depends on D271, which acts as the Proton acceptor.

It belongs to the phosphofructokinase type A (PFKA) family. PPi-dependent PFK group II subfamily. Atypical ATP-dependent clade 'X' sub-subfamily. As to quaternary structure, homotetramer. The cofactor is Mg(2+). Expressed in leaves, stems and flowers.

It localises to the plastid. Its subcellular location is the chloroplast. It carries out the reaction beta-D-fructose 6-phosphate + ATP = beta-D-fructose 1,6-bisphosphate + ADP + H(+). The protein operates within carbohydrate degradation; glycolysis; D-glyceraldehyde 3-phosphate and glycerone phosphate from D-glucose: step 3/4. Allosterically activated by AMP. In terms of biological role, catalyzes the phosphorylation of D-fructose 6-phosphate to fructose 1,6-bisphosphate by ATP, the first committing step of glycolysis. This Arabidopsis thaliana (Mouse-ear cress) protein is ATP-dependent 6-phosphofructokinase 4, chloroplastic.